The sequence spans 404 residues: Serine/threonine transporter SstT (404 aa).

The next 9 membrane-spanning stretches (helical) occupy residues 11–31 (IINA…IILA), 44–64 (LGGL…FVLV), 82–102 (IISL…TMSF), 144–164 (TANY…LHHA), 179–199 (VSFI…GLVA), 218–238 (GVLL…MVFI), 290–310 (IPLG…VLTL), 316–336 (MGIQ…AISA), and 363–383 (VAMQ…SAET).

This sequence belongs to the dicarboxylate/amino acid:cation symporter (DAACS) (TC 2.A.23) family.

It is found in the cell inner membrane. The enzyme catalyses L-serine(in) + Na(+)(in) = L-serine(out) + Na(+)(out). It carries out the reaction L-threonine(in) + Na(+)(in) = L-threonine(out) + Na(+)(out). Involved in the import of serine and threonine into the cell, with the concomitant import of sodium (symport system). The chain is Serine/threonine transporter SstT from Desulfotalea psychrophila (strain LSv54 / DSM 12343).